Here is a 232-residue protein sequence, read N- to C-terminus: Ribosomal RNA small subunit methyltransferase G (232 aa).

A disordered region spans residues 1-24 (MVDTALHPIPGRRTPPHPRSTLPL). Residues Gly91, Leu96, 142 to 143 (AE), and Arg160 contribute to the S-adenosyl-L-methionine site.

This sequence belongs to the methyltransferase superfamily. RNA methyltransferase RsmG family.

The protein localises to the cytoplasm. Functionally, specifically methylates the N7 position of guanine in position 518 of 16S rRNA. The protein is Ribosomal RNA small subunit methyltransferase G of Corynebacterium efficiens (strain DSM 44549 / YS-314 / AJ 12310 / JCM 11189 / NBRC 100395).